A 346-amino-acid polypeptide reads, in one-letter code: 3 beta-hydroxysteroid dehydrogenase/Delta 5--&gt;4-isomerase (346 aa).

Catalysis depends on Tyr-147, which acts as the Proton acceptor. Lys-151 is a binding site for NAD(+).

This sequence belongs to the 3-beta-HSD family.

It catalyses the reaction a 3beta-hydroxy-Delta(5)-steroid + NAD(+) = a 3-oxo-Delta(5)-steroid + NADH + H(+). It carries out the reaction a 3-oxo-Delta(5)-steroid = a 3-oxo-Delta(4)-steroid. It participates in lipid metabolism; steroid biosynthesis. In terms of biological role, catalyzes the oxidative conversion of Delta(5)-ene-3-beta-hydroxy steroid, and the oxidative conversion of ketosteroids. The 3-beta-HSD enzymatic system plays a crucial role in the biosynthesis of all classes of hormonal steroids. During viral infection, steroid production contributes to virulence by inhibiting the host inflammatory response. The polypeptide is 3 beta-hydroxysteroid dehydrogenase/Delta 5--&gt;4-isomerase (OPG174) (Vaccinia virus (strain Western Reserve) (VACV)).